A 1877-amino-acid chain; its full sequence is Protein TIC 214 (1877 aa).

A run of 6 helical transmembrane segments spans residues 18 to 38 (IINS…FSIG), 67 to 87 (FIAG…HLAL), 90 to 110 (PHTI…WNNH), 127 to 147 (LSIQ…HFIL), 175 to 195 (VGWL…LVWI), and 224 to 244 (IFSI…PSPI). Positions 249–258 (FKETSETEER) are enriched in basic and acidic residues. Positions 249-308 (FKETSETEERGEGEEETDVEIETTFETKGTRQEQEGSTEEDPSLFSEEKEDPDKIDEREE) are disordered. Acidic residues-rich tracts occupy residues 259–271 (GEGE…EIET) and 284–298 (GSTE…EEKE). Positions 299–308 (DPDKIDEREE) are enriched in basic and acidic residues.

Belongs to the TIC214 family. Part of the Tic complex.

It is found in the plastid. It localises to the chloroplast inner membrane. Functionally, involved in protein precursor import into chloroplasts. May be part of an intermediate translocation complex acting as a protein-conducting channel at the inner envelope. This chain is Protein TIC 214, found in Eucalyptus globulus subsp. globulus (Tasmanian blue gum).